The following is a 122-amino-acid chain: Large ribosomal subunit protein uL18 (122 aa).

Belongs to the universal ribosomal protein uL18 family. Part of the 50S ribosomal subunit; part of the 5S rRNA/L5/L18/L25 subcomplex. Contacts the 5S and 23S rRNAs.

Functionally, this is one of the proteins that bind and probably mediate the attachment of the 5S RNA into the large ribosomal subunit, where it forms part of the central protuberance. The polypeptide is Large ribosomal subunit protein uL18 (Synechococcus sp. (strain JA-3-3Ab) (Cyanobacteria bacterium Yellowstone A-Prime)).